Reading from the N-terminus, the 434-residue chain is Methylenetetrahydrofolate--tRNA-(uracil-5-)-methyltransferase TrmFO (434 aa).

FAD is bound at residue 10–15 (GAGLAG).

It belongs to the MnmG family. TrmFO subfamily. It depends on FAD as a cofactor.

The protein resides in the cytoplasm. The catalysed reaction is uridine(54) in tRNA + (6R)-5,10-methylene-5,6,7,8-tetrahydrofolate + NADH + H(+) = 5-methyluridine(54) in tRNA + (6S)-5,6,7,8-tetrahydrofolate + NAD(+). The enzyme catalyses uridine(54) in tRNA + (6R)-5,10-methylene-5,6,7,8-tetrahydrofolate + NADPH + H(+) = 5-methyluridine(54) in tRNA + (6S)-5,6,7,8-tetrahydrofolate + NADP(+). In terms of biological role, catalyzes the folate-dependent formation of 5-methyl-uridine at position 54 (M-5-U54) in all tRNAs. The chain is Methylenetetrahydrofolate--tRNA-(uracil-5-)-methyltransferase TrmFO from Bacillus cereus (strain ATCC 14579 / DSM 31 / CCUG 7414 / JCM 2152 / NBRC 15305 / NCIMB 9373 / NCTC 2599 / NRRL B-3711).